Reading from the N-terminus, the 380-residue chain is Alcohol dehydrogenase 1 (380 aa).

Zn(2+)-binding residues include C48, T50, H70, C100, C103, C106, C114, and C178. An alcohol is bound by residues T50 and H70. T50 provides a ligand contact to NAD(+). NAD(+) is bound by residues 203–208, D227, R232, T273, V296, 296–298, and R373; these read GLGAVG and VGV.

The protein belongs to the zinc-containing alcohol dehydrogenase family. As to quaternary structure, homodimer. Requires Zn(2+) as cofactor.

Its subcellular location is the cytoplasm. The catalysed reaction is a primary alcohol + NAD(+) = an aldehyde + NADH + H(+). The enzyme catalyses a secondary alcohol + NAD(+) = a ketone + NADH + H(+). This chain is Alcohol dehydrogenase 1 (ADH1), found in Trifolium repens (Creeping white clover).